A 785-amino-acid chain; its full sequence is Endonuclease MutS2 (785 aa).

335–342 (GPNTGGKT) provides a ligand contact to ATP. One can recognise a Smr domain in the interval 710–785 (LDLRGERYEE…GLGNTVVELR (76 aa)). The disordered stretch occupies residues 764–785 (VKSARDGGANEGGLGNTVVELR).

This sequence belongs to the DNA mismatch repair MutS family. MutS2 subfamily. As to quaternary structure, homodimer. Binds to stalled ribosomes, contacting rRNA.

Endonuclease that is involved in the suppression of homologous recombination and thus may have a key role in the control of bacterial genetic diversity. Its function is as follows. Acts as a ribosome collision sensor, splitting the ribosome into its 2 subunits. Detects stalled/collided 70S ribosomes which it binds and splits by an ATP-hydrolysis driven conformational change. Acts upstream of the ribosome quality control system (RQC), a ribosome-associated complex that mediates the extraction of incompletely synthesized nascent chains from stalled ribosomes and their subsequent degradation. Probably generates substrates for RQC. The polypeptide is Endonuclease MutS2 (Halalkalibacterium halodurans (strain ATCC BAA-125 / DSM 18197 / FERM 7344 / JCM 9153 / C-125) (Bacillus halodurans)).